A 465-amino-acid chain; its full sequence is Catalase cnsD (465 aa).

The active site involves His-39. Position 331 (Tyr-331) interacts with heme.

It belongs to the catalase family. Heme is required as a cofactor.

It participates in alkaloid biosynthesis. Its function is as follows. Catalase; part of the gene cluster that mediates the biosynthesis of communesins, a prominent class of indole alkaloids with great potential as pharmaceuticals. Communesins are biosynthesized by the coupling of tryptamine and aurantioclavine, two building blocks derived from L-tryptophan. The L-tryptophan decarboxylase cnsB converts L-tryptophan to tryptamine, whereas the tryptophan dimethylallyltransferase cnsF converts L-tryptophan to 4-dimethylallyl tryptophan which is further transformed to aurantioclavine by the aurantioclavine synthase cnsA, probably aided by the catalase cnsD. The cytochrome P450 monooxygenase cnsC catalyzes the heterodimeric coupling between the two different indole moieties, tryptamine and aurantioclavine, to construct vicinal quaternary stereocenters and yield the heptacyclic communesin scaffold. The O-methyltransferase cnsE then methylates the communesin scaffold to produce communesin K, the simplest characterized communesin that contains the heptacyclic core. The dioxygenase cnsJ converts communesin K into communesin I. Acylation to introduce the hexadienyl group at position N16 of communesin I by the acyltransferase cnsK leads to the production of communesin B. The hexadienyl group is produced by the highly reducing polyketide synthase cnsI, before being hydrolytically removed from cnsI by the serine hydrolase cnsH, converted into hexadienyl-CoA by the CoA ligase cnsG, and then transferred to communesin I by cnsK. Surprisingly, cnsK may also be a promiscuous acyltransferase that can tolerate a range of acyl groups, including acetyl-, propionyl-, and butyryl-CoA, which lead to communesins A, G and H respectively. The roles of the alpha-ketoglutarate-dependent dioxygenases cnsM and cnsP have still to be determined. This is Catalase cnsD from Penicillium expansum (Blue mold rot fungus).